The following is a 249-amino-acid chain: Proteasome subunit alpha type-4 (249 aa).

The protein belongs to the peptidase T1A family. As to quaternary structure, the 26S proteasome consists of a 20S proteasome core and two 19S regulatory subunits. The 20S proteasome core is composed of 28 subunits that are arranged in four stacked rings, resulting in a barrel-shaped structure. The two end rings are each formed by seven alpha subunits, and the two central rings are each formed by seven beta subunits. The catalytic chamber with the active sites is on the inside of the barrel.

It localises to the cytoplasm. The protein resides in the nucleus. Its function is as follows. The proteasome is a multicatalytic proteinase complex which is characterized by its ability to cleave peptides with Arg, Phe, Tyr, Leu, and Glu adjacent to the leaving group at neutral or slightly basic pH. The proteasome has an ATP-dependent proteolytic activity. The sequence is that of Proteasome subunit alpha type-4 (PAC1) from Petunia hybrida (Petunia).